The sequence spans 416 residues: Adenylosuccinate synthetase (416 aa).

GTP is bound by residues Gly13 to Lys19 and Gly41 to Thr43. The active-site Proton acceptor is the Asp14. Mg(2+) is bound by residues Asp14 and Gly41. IMP is bound by residues Asp14–Lys17, Asn39–His42, Thr126, Arg140, Gln220, Thr235, and Arg299. His42 serves as the catalytic Proton donor. Residue Thr295 to Arg301 coordinates substrate. GTP contacts are provided by residues Arg301, Lys327–Asp329, and Ser405–Ser407.

It belongs to the adenylosuccinate synthetase family. As to quaternary structure, homodimer. The cofactor is Mg(2+).

The protein resides in the cytoplasm. The catalysed reaction is IMP + L-aspartate + GTP = N(6)-(1,2-dicarboxyethyl)-AMP + GDP + phosphate + 2 H(+). It participates in purine metabolism; AMP biosynthesis via de novo pathway; AMP from IMP: step 1/2. Functionally, plays an important role in the de novo pathway of purine nucleotide biosynthesis. Catalyzes the first committed step in the biosynthesis of AMP from IMP. The chain is Adenylosuccinate synthetase from Campylobacter curvus (strain 525.92).